We begin with the raw amino-acid sequence, 57 residues long: Large ribosomal subunit protein bL32c (57 aa).

Belongs to the bacterial ribosomal protein bL32 family.

It localises to the plastid. The protein localises to the chloroplast. The chain is Large ribosomal subunit protein bL32c from Phalaenopsis aphrodite subsp. formosana (Moth orchid).